Reading from the N-terminus, the 310-residue chain is Olfactory receptor 5P1 (310 aa).

The Extracellular portion of the chain corresponds to 1-25; it reads MEPGNHTAVTKFILLGLTDDPTLCV. Residue asparagine 5 is glycosylated (N-linked (GlcNAc...) asparagine). Residues 26-46 form a helical membrane-spanning segment; it reads IFFVFFLGIYIVTLVGNISII. Residues 47–54 lie on the Cytoplasmic side of the membrane; it reads NLVRSCPQ. The chain crosses the membrane as a helical span at residues 55–75; it reads LQTPMYMFLSHLAFVDIGYST. Topologically, residues 76-99 are extracellular; that stretch reads SVTPIMLIGFIVHETGLPVHACEA. Cysteine 97 and cysteine 189 are disulfide-bonded. Residues 100–120 traverse the membrane as a helical segment; sequence QLCSVVTFGTAECFLLAAMAY. Over 121–133 the chain is Cytoplasmic; sequence DRYVAICSPLLYS. The chain crosses the membrane as a helical span at residues 134-154; sequence THMSSQICLLLVGASYVGGCV. Residues 155-196 are Extracellular-facing; it reads NAWTFTGCLLSLSFCGPNKIDHFFCDFSPLLKLSCSDVSIIG. The helical transmembrane segment at 197–217 threads the bilayer; that stretch reads IIPSISAGSIIVVTVFVISVS. Residues 218-237 lie on the Cytoplasmic side of the membrane; sequence YIYILITILKMRSTEGRHKA. The chain crosses the membrane as a helical span at residues 238-258; the sequence is FSTCTSHLTAVTLYYGTITFI. Over 259–271 the chain is Extracellular; the sequence is YVMPKSSYSTKQN. The helical transmembrane segment at 272 to 292 threads the bilayer; that stretch reads RVVSLFYTVVIPMLNPLIYSL. Topologically, residues 293 to 310 are cytoplasmic; the sequence is RNRDVKEALRKATLRIYS.

This sequence belongs to the G-protein coupled receptor 1 family.

It localises to the cell membrane. Potential odorant receptor. In Mus musculus (Mouse), this protein is Olfactory receptor 5P1.